The chain runs to 64 residues: Large ribosomal subunit protein bL35 (64 aa).

A compositionally biased stretch (basic residues) spans 1–44; sequence MSKIKSHSGAAKRFKRTANGFKHKQSHTSHILTKKSTKRKRHLR. Residues 1–48 are disordered; it reads MSKIKSHSGAAKRFKRTANGFKHKQSHTSHILTKKSTKRKRHLRSMNQ.

The protein belongs to the bacterial ribosomal protein bL35 family.

The chain is Large ribosomal subunit protein bL35 from Marinomonas sp. (strain MWYL1).